The chain runs to 96 residues: Co-chaperonin GroES (96 aa).

It belongs to the GroES chaperonin family. In terms of assembly, heptamer of 7 subunits arranged in a ring. Interacts with the chaperonin GroEL.

Its subcellular location is the cytoplasm. Together with the chaperonin GroEL, plays an essential role in assisting protein folding. The GroEL-GroES system forms a nano-cage that allows encapsulation of the non-native substrate proteins and provides a physical environment optimized to promote and accelerate protein folding. GroES binds to the apical surface of the GroEL ring, thereby capping the opening of the GroEL channel. The chain is Co-chaperonin GroES from Holospora obtusa.